Reading from the N-terminus, the 267-residue chain is Indole-3-glycerol phosphate synthase (267 aa).

It belongs to the TrpC family.

It catalyses the reaction 1-(2-carboxyphenylamino)-1-deoxy-D-ribulose 5-phosphate + H(+) = (1S,2R)-1-C-(indol-3-yl)glycerol 3-phosphate + CO2 + H2O. It functions in the pathway amino-acid biosynthesis; L-tryptophan biosynthesis; L-tryptophan from chorismate: step 4/5. This chain is Indole-3-glycerol phosphate synthase, found in Dichelobacter nodosus (strain VCS1703A).